The following is a 472-amino-acid chain: UDP-N-acetylmuramate--L-alanine ligase (472 aa).

122–128 (GSHGKTT) contributes to the ATP binding site.

The protein belongs to the MurCDEF family.

It localises to the cytoplasm. The catalysed reaction is UDP-N-acetyl-alpha-D-muramate + L-alanine + ATP = UDP-N-acetyl-alpha-D-muramoyl-L-alanine + ADP + phosphate + H(+). Its pathway is cell wall biogenesis; peptidoglycan biosynthesis. Functionally, cell wall formation. In Myxococcus xanthus (strain DK1622), this protein is UDP-N-acetylmuramate--L-alanine ligase.